A 151-amino-acid chain; its full sequence is 3-hydroxyacyl-[acyl-carrier-protein] dehydratase FabZ (151 aa).

The active site involves H54.

It belongs to the thioester dehydratase family. FabZ subfamily.

It is found in the cytoplasm. It catalyses the reaction a (3R)-hydroxyacyl-[ACP] = a (2E)-enoyl-[ACP] + H2O. Its function is as follows. Involved in unsaturated fatty acids biosynthesis. Catalyzes the dehydration of short chain beta-hydroxyacyl-ACPs and long chain saturated and unsaturated beta-hydroxyacyl-ACPs. This chain is 3-hydroxyacyl-[acyl-carrier-protein] dehydratase FabZ, found in Blochmanniella pennsylvanica (strain BPEN).